Reading from the N-terminus, the 319-residue chain is Acetyl esterase (319 aa).

The short motif at 91-93 (HGG) is the Involved in the stabilization of the negatively charged intermediate by the formation of the oxyanion hole element. Catalysis depends on residues Ser165, Asp262, and His292.

It belongs to the 'GDXG' lipolytic enzyme family. As to quaternary structure, homodimer. Interacts with MalT and MelA.

The protein resides in the cytoplasm. Functionally, displays esterase activity towards short chain fatty esters (acyl chain length of up to 8 carbons). Able to hydrolyze triacetylglycerol (triacetin) and tributyrylglycerol (tributyrin), but not trioleylglycerol (triolein) or cholesterol oleate. Negatively regulates MalT activity by antagonizing maltotriose binding. Inhibits MelA galactosidase activity. The chain is Acetyl esterase from Shigella boydii serotype 4 (strain Sb227).